We begin with the raw amino-acid sequence, 499 residues long: Neuronal acetylcholine receptor subunit alpha-3 (499 aa).

Residues 1–25 (MGVVLPPPPLSMLMLVLMLLPVASA) form the signal peptide. Topologically, residues 26 to 244 (SEAEHRLFQY…PLFYTINLII (219 aa)) are extracellular. N49 and N166 each carry an N-linked (GlcNAc...) asparagine glycan. 2 cysteine pairs are disulfide-bonded: C153–C167 and C217–C218. The helical transmembrane segment at 245–260 (PCLLISFLTVLVFYLP) threads the bilayer. The Cytoplasmic portion of the chain corresponds to 261 to 262 (SD). Residues 263 to 279 (CGEKVTLCISVLLSLTV) traverse the membrane as a helical segment. E265 lines the Na(+) pocket. The Extracellular segment spans residues 280 to 301 (FLLVITETIPSTSLVIPLIGEY). Residues 302 to 320 (LLFTMIFVTLSIVITVFVL) form a helical membrane-spanning segment. Over 321-468 (NVHYRTPTTH…QDDWKYVAMV (148 aa)) the chain is Cytoplasmic. A phosphoserine mark is found at S407 and S410. Residues 469 to 487 (IDRIFLWVFILVCILGTAG) traverse the membrane as a helical segment. Residues 488-499 (LFLQPLMARDDT) lie on the Extracellular side of the membrane.

This sequence belongs to the ligand-gated ion channel (TC 1.A.9) family. Acetylcholine receptor (TC 1.A.9.1) subfamily. Alpha-3/CHRNA3 sub-subfamily. In terms of assembly, neuronal AChR is composed of two different types of subunits: alpha and beta. CHRNA3/Alpha-3 subunit can be combined to CHRNB2/beta-2 or CHRNB4/beta-4 to give rise to functional receptors. Part of a complex composed of STUB1/CHIP, VCP/p97, CHRNA3, and UBXN2A that modulates the ubiquitination and endoplasmic reticulum-associated degradation (ERAD) of CHRNA3. Within the complex UBXN2A acts as a scaffold protein required for the interaction of CHRNA3 with VCP/p97, this interaction also inhibits CHRNA3 ubiquitination by STUB1/CHIP and subsequently ERAD. Interacts with UBXN2A (via SEP domain), the interaction is required for the interaction of CHRNA3 in the STUB1:VCP:UBXN2A complex. Interacts with RIC3; which is required for proper folding and assembly. Interacts with LYPD6. Ubiquitinated; by STUB1/CHIP and thereafter degraded by the 26S proteosome complex. As to expression, expressed in the brain (at protein level).

The protein resides in the synaptic cell membrane. Its subcellular location is the cell membrane. It is found in the endoplasmic reticulum. The protein localises to the golgi apparatus. It catalyses the reaction K(+)(in) = K(+)(out). It carries out the reaction Na(+)(in) = Na(+)(out). The enzyme catalyses Ca(2+)(in) = Ca(2+)(out). Activated by a myriad of ligands such as acetylcholine, cytisine, nicotine, choline and epibatidine. The heteropentamer CHRNA3:CHRNB2 activity is blocked by alpha-conotoxins ImI, ImII, PnIA, GID and MII. The heteropentamer CHRNA3:CHRNB4 activity is blocked by the alpha-conotoxin ImI. Its function is as follows. Component of neuronal acetylcholine receptors (nAChRs) that function as pentameric, ligand-gated cation channels with high calcium permeability among other activities. nAChRs are excitatory neurotrasnmitter receptors formed by a collection of nAChR subunits known to mediate synaptic transmission in the nervous system and the neuromuscular junction. Each nAchR subunit confers differential attributes to channel properties, including activation, deactivation and desensitization kinetics, pH sensitivity, cation permeability, and binding to allosteric modulators. CHRNA3 forms heteropentameric neuronal acetylcholine receptors with CHRNA5, CHRNB2 and CHRNB4. CHRNA3:CHRNB4 being predominant in neurons of the autonomic ganglia, it is known as ganglionic nicotinic receptor. CHRNA3:CHRNB4 or CHRNA3:CHRNA5:CHRNB4 play also an important role in the habenulo-interpeduncular tract, modulating the mesolimbic dopamine system and affecting reward circuits and addiction. Hypothalamic CHRNA3:CHRNB4 nAChR activation by nicotine leads to activation of POMC neurons and a decrease in food intake. Also expressed in the urothelium where it modulates reflex bladder activity by increasing intracellular calcium through extracellular influx and basal ATP release. The protein is Neuronal acetylcholine receptor subunit alpha-3 (Chrna3) of Mus musculus (Mouse).